Here is a 447-residue protein sequence, read N- to C-terminus: Selenide, water dikinase 3 (447 aa).

Sec-50 is a catalytic residue. Position 50 (Sec-50) is a non-standard amino acid, selenocysteine. ATP-binding positions include Lys-53, Gly-103–Asp-105, Asp-123, Asp-146, and Gly-197–Thr-200. Asp-105 serves as a coordination point for Mg(2+). Mg(2+) is bound at residue Asp-146. Asp-301 contributes to the Mg(2+) binding site.

It belongs to the selenophosphate synthase 1 family. Homodimer. The cofactor is Mg(2+). As to expression, in the embryo, expressed in retina, olfactory vesicles, tectum, pronephros ducts and myotomes at 24 hours post-fertilization and in retina, tectum, liver and intestinal bulb 3 days after fertilization.

It carries out the reaction hydrogenselenide + ATP + H2O = selenophosphate + AMP + phosphate + 2 H(+). In terms of biological role, synthesizes selenophosphate from selenide and ATP. In Danio rerio (Zebrafish), this protein is Selenide, water dikinase 3.